Consider the following 434-residue polypeptide: Beta-enolase (434 aa).

The residue at position 2 (alanine 2) is an N-acetylalanine. Threonine 72 bears the Phosphothreonine mark. Phosphoserine is present on residues serine 83 and serine 157. The substrate site is built by histidine 158 and glutamate 167. Serine 176 carries the phosphoserine modification. Threonine 205 bears the Phosphothreonine mark. Glutamate 210 serves as the catalytic Proton donor. Threonine 229 bears the Phosphothreonine mark. Tyrosine 236 bears the Phosphotyrosine mark. Aspartate 245 is a binding site for Mg(2+). Serine 263 is modified (phosphoserine). Substrate contacts are provided by glutamate 293 and aspartate 318. Mg(2+)-binding residues include glutamate 293 and aspartate 318. Lysine 343 (proton acceptor) is an active-site residue. Substrate-binding positions include 370-373 and lysine 394; that span reads SHRS.

Belongs to the enolase family. As to quaternary structure, mammalian enolase is composed of 3 isozyme subunits, alpha, beta and gamma, which can form homodimers or heterodimers which are cell-type and development-specific. Interacts with PNKD. Mg(2+) serves as cofactor. The alpha/alpha homodimer is expressed in embryo and in most adult tissues. The alpha/beta heterodimer and the beta/beta homodimer are found in striated muscle, and the alpha/gamma heterodimer and the gamma/gamma homodimer in neurons.

Its subcellular location is the cytoplasm. It catalyses the reaction (2R)-2-phosphoglycerate = phosphoenolpyruvate + H2O. It functions in the pathway carbohydrate degradation; glycolysis; pyruvate from D-glyceraldehyde 3-phosphate: step 4/5. Functionally, glycolytic enzyme that catalyzes the conversion of 2-phosphoglycerate to phosphoenolpyruvate. Appears to have a function in striated muscle development and regeneration. This chain is Beta-enolase (ENO3), found in Homo sapiens (Human).